Consider the following 145-residue polypeptide: Eukaryotic translation initiation factor 1A (145 aa).

A compositionally biased stretch (basic residues) spans 1–15 (MPKNKGKGGKNRKRG). The segment at 1–25 (MPKNKGKGGKNRKRGKNEADDDKRE) is disordered. Residues 16–25 (KNEADDDKRE) show a composition bias toward basic and acidic residues. The region spanning 22–96 (DKRELVFKED…DKADVILKLM (75 aa)) is the S1-like domain.

Belongs to the eIF-1A family.

Seems to be required for maximal rate of protein biosynthesis. Enhances ribosome dissociation into subunits and stabilizes the binding of the initiator Met-tRNA(I) to 40 S ribosomal subunits. The sequence is that of Eukaryotic translation initiation factor 1A from Onobrychis viciifolia (Common sainfoin).